Consider the following 346-residue polypeptide: Peroxidase 9 (346 aa).

The N-terminal stretch at methionine 1–alanine 23 is a signal peptide. Intrachain disulfides connect cysteine 54/cysteine 134, cysteine 87/cysteine 92, cysteine 140/cysteine 342, and cysteine 219/cysteine 251. The active-site Proton acceptor is histidine 85. Residues aspartate 86, valine 89, glycine 91, aspartate 93, and serine 95 each coordinate Ca(2+). A substrate-binding site is contributed by proline 182. N-linked (GlcNAc...) asparagine glycosylation is present at asparagine 185. Residue histidine 212 participates in heme b binding. Ca(2+) is bound at residue threonine 213. Residues aspartate 264, serine 267, and aspartate 272 each coordinate Ca(2+).

Belongs to the peroxidase family. Classical plant (class III) peroxidase subfamily. It depends on heme b as a cofactor. Ca(2+) is required as a cofactor.

The protein localises to the secreted. The catalysed reaction is 2 a phenolic donor + H2O2 = 2 a phenolic radical donor + 2 H2O. Its function is as follows. Removal of H(2)O(2), oxidation of toxic reductants, biosynthesis and degradation of lignin, suberization, auxin catabolism, response to environmental stresses such as wounding, pathogen attack and oxidative stress. These functions might be dependent on each isozyme/isoform in each plant tissue. This Arabidopsis thaliana (Mouse-ear cress) protein is Peroxidase 9 (PER9).